The sequence spans 954 residues: Glycine dehydrogenase (decarboxylating) (954 aa).

K706 carries the N6-(pyridoxal phosphate)lysine modification.

The protein belongs to the GcvP family. In terms of assembly, the glycine cleavage system is composed of four proteins: P, T, L and H. Requires pyridoxal 5'-phosphate as cofactor.

The enzyme catalyses N(6)-[(R)-lipoyl]-L-lysyl-[glycine-cleavage complex H protein] + glycine + H(+) = N(6)-[(R)-S(8)-aminomethyldihydrolipoyl]-L-lysyl-[glycine-cleavage complex H protein] + CO2. Its function is as follows. The glycine cleavage system catalyzes the degradation of glycine. The P protein binds the alpha-amino group of glycine through its pyridoxal phosphate cofactor; CO(2) is released and the remaining methylamine moiety is then transferred to the lipoamide cofactor of the H protein. The sequence is that of Glycine dehydrogenase (decarboxylating) from Pseudomonas syringae pv. tomato (strain ATCC BAA-871 / DC3000).